A 406-amino-acid chain; its full sequence is Mitochondrial ribosome-associated GTPase 2 (406 aa).

A localized in the mitochondria region spans residues 15-406 (FQGVGHWALS…LGQGRQPLRW (392 aa)). Residues 30-406 (KPSRLLPQRA…LGQGRQPLRW (377 aa)) are not localized in the mitochondria. Positions 70-224 (RYFVDYRRVL…RVLHLELKTV (155 aa)) constitute an Obg domain. The region spanning 225-390 (AHAGMVGFPN…LLLHLKVLYD (166 aa)) is the OBG-type G domain. GTP-binding positions include 231 to 238 (GFPNAGKS), 256 to 260 (FTTLK), 278 to 281 (DIPG), 345 to 348 (NKID), and 371 to 373 (SAL). The Mg(2+) site is built by Ser-238 and Thr-258.

Belongs to the TRAFAC class OBG-HflX-like GTPase superfamily. OBG GTPase family. As to quaternary structure, associates with the mitochondrial ribosome large subunit; the association occurs in a GTP-dependent manner. Mg(2+) is required as a cofactor.

The protein localises to the mitochondrion. Its subcellular location is the mitochondrion inner membrane. Functionally, plays a role in the regulation of the mitochondrial ribosome assembly and of translational activity. Displays GTPase activity. Involved in the ribosome maturation process. In Homo sapiens (Human), this protein is Mitochondrial ribosome-associated GTPase 2 (MTG2).